Reading from the N-terminus, the 144-residue chain is Large ribosomal subunit protein uL16 (144 aa).

It belongs to the universal ribosomal protein uL16 family. As to quaternary structure, part of the 50S ribosomal subunit.

Its function is as follows. Binds 23S rRNA and is also seen to make contacts with the A and possibly P site tRNAs. This chain is Large ribosomal subunit protein uL16, found in Novosphingobium aromaticivorans (strain ATCC 700278 / DSM 12444 / CCUG 56034 / CIP 105152 / NBRC 16084 / F199).